The primary structure comprises 441 residues: tRNA modification GTPase MnmE (441 aa).

Arg-23, Glu-81, and Arg-121 together coordinate (6S)-5-formyl-5,6,7,8-tetrahydrofolate. Residues 219–366 (GFTVVLAGAP…LLDAIQAAAE (148 aa)) enclose the TrmE-type G domain. GTP-binding positions include 229–234 (NSGKST), 248–254 (SDSPGTT), and 273–276 (DTAG). 2 residues coordinate Mg(2+): Ser-233 and Thr-254. Residue Lys-441 coordinates (6S)-5-formyl-5,6,7,8-tetrahydrofolate.

Belongs to the TRAFAC class TrmE-Era-EngA-EngB-Septin-like GTPase superfamily. TrmE GTPase family. Homodimer. Heterotetramer of two MnmE and two MnmG subunits. It depends on K(+) as a cofactor.

It localises to the cytoplasm. In terms of biological role, exhibits a very high intrinsic GTPase hydrolysis rate. Involved in the addition of a carboxymethylaminomethyl (cmnm) group at the wobble position (U34) of certain tRNAs, forming tRNA-cmnm(5)s(2)U34. The polypeptide is tRNA modification GTPase MnmE (Methylobacterium radiotolerans (strain ATCC 27329 / DSM 1819 / JCM 2831 / NBRC 15690 / NCIMB 10815 / 0-1)).